We begin with the raw amino-acid sequence, 148 residues long: Large-conductance mechanosensitive channel (148 aa).

2 helical membrane passes run 9–29 (AFAV…GAAF) and 79–99 (IQTV…VKAI).

Belongs to the MscL family. Homopentamer.

Its subcellular location is the cell inner membrane. In terms of biological role, channel that opens in response to stretch forces in the membrane lipid bilayer. May participate in the regulation of osmotic pressure changes within the cell. The polypeptide is Large-conductance mechanosensitive channel (Pseudomonas savastanoi pv. phaseolicola (strain 1448A / Race 6) (Pseudomonas syringae pv. phaseolicola (strain 1448A / Race 6))).